The following is a 410-amino-acid chain: Protein LTV1 homolog (410 aa).

Disordered regions lie at residues 142 to 165 and 325 to 378; these read VYRS…DEMY and EMDI…ARKL. 2 stretches are compositionally biased toward acidic residues: residues 151-165 and 325-345; these read DSEE…DEMY and EMDI…DDDK. The span at 357–366 shows a compositional bias: basic and acidic residues; that stretch reads PKNETPEQRS. Positions 363–389 form a coiled coil; it reads EQRSLRKKAVKEARKLRRVEKKANKTM. Residues 367-378 show a composition bias toward basic residues; the sequence is LRKKAVKEARKL.

Belongs to the LTV1 family.

In Caenorhabditis elegans, this protein is Protein LTV1 homolog.